The chain runs to 143 residues: AP-2 complex subunit sigma (143 aa).

This sequence belongs to the adaptor complexes small subunit family. As to quaternary structure, adaptor protein complex 2 (AP-2) is a heterotetramer composed of two large adaptins (alpha-type subunit APL3 and beta-type subunit APL1), a medium chain (mu-type subunit APM4) and a small adaptin (sigma-type subunit APS2).

It localises to the cell membrane. The protein localises to the membrane. Its subcellular location is the coated pit. In terms of biological role, component of the adaptor complexes which link clathrin to receptors in coated vesicles. Clathrin-associated protein complexes are believed to interact with the cytoplasmic tails of membrane proteins, leading to their selection and concentration. This is AP-2 complex subunit sigma (aps-2) from Neurospora crassa (strain ATCC 24698 / 74-OR23-1A / CBS 708.71 / DSM 1257 / FGSC 987).